The sequence spans 392 residues: Formate-dependent phosphoribosylglycinamide formyltransferase (392 aa).

N(1)-(5-phospho-beta-D-ribosyl)glycinamide-binding positions include 20–21 (EL) and E80. Residues R112, K153, 158-163 (SSGKGQ), 193-196 (EGFI), and E201 contribute to the ATP site. Residues 117-306 (RLAAETLALP…EFALHVRAIL (190 aa)) enclose the ATP-grasp domain. Mg(2+) is bound by residues E265 and E277. Residues D284, K354, and 361 to 362 (RR) contribute to the N(1)-(5-phospho-beta-D-ribosyl)glycinamide site.

It belongs to the PurK/PurT family. Homodimer.

The enzyme catalyses N(1)-(5-phospho-beta-D-ribosyl)glycinamide + formate + ATP = N(2)-formyl-N(1)-(5-phospho-beta-D-ribosyl)glycinamide + ADP + phosphate + H(+). It participates in purine metabolism; IMP biosynthesis via de novo pathway; N(2)-formyl-N(1)-(5-phospho-D-ribosyl)glycinamide from N(1)-(5-phospho-D-ribosyl)glycinamide (formate route): step 1/1. In terms of biological role, involved in the de novo purine biosynthesis. Catalyzes the transfer of formate to 5-phospho-ribosyl-glycinamide (GAR), producing 5-phospho-ribosyl-N-formylglycinamide (FGAR). Formate is provided by PurU via hydrolysis of 10-formyl-tetrahydrofolate. In Shewanella amazonensis (strain ATCC BAA-1098 / SB2B), this protein is Formate-dependent phosphoribosylglycinamide formyltransferase.